A 466-amino-acid chain; its full sequence is ATP synthase subunit beta (466 aa).

156–163 (GGAGVGKT) contributes to the ATP binding site.

This sequence belongs to the ATPase alpha/beta chains family. As to quaternary structure, F-type ATPases have 2 components, CF(1) - the catalytic core - and CF(0) - the membrane proton channel. CF(1) has five subunits: alpha(3), beta(3), gamma(1), delta(1), epsilon(1). CF(0) has three main subunits: a(1), b(2) and c(9-12). The alpha and beta chains form an alternating ring which encloses part of the gamma chain. CF(1) is attached to CF(0) by a central stalk formed by the gamma and epsilon chains, while a peripheral stalk is formed by the delta and b chains.

Its subcellular location is the cell membrane. It catalyses the reaction ATP + H2O + 4 H(+)(in) = ADP + phosphate + 5 H(+)(out). In terms of biological role, produces ATP from ADP in the presence of a proton gradient across the membrane. The catalytic sites are hosted primarily by the beta subunits. The polypeptide is ATP synthase subunit beta (Buchnera aphidicola subsp. Schizaphis graminum (strain Sg)).